A 321-amino-acid polypeptide reads, in one-letter code: D-alanine--D-alanine ligase (321 aa).

Residues 121–315 form the ATP-grasp domain; sequence RSWFLTNNIN…FTNLIEEIIK (195 aa). Residue 147 to 199 coordinates ATP; sequence PVKRPYVIKPLTQGSSIGVEVIFEEDDFNFADYNFPYGYQVIIEQYIKGRELQ. Glutamate 268, glutamate 282, and asparagine 284 together coordinate Mg(2+).

The protein belongs to the D-alanine--D-alanine ligase family. Requires Mg(2+) as cofactor. Mn(2+) is required as a cofactor.

The protein localises to the cytoplasm. It catalyses the reaction 2 D-alanine + ATP = D-alanyl-D-alanine + ADP + phosphate + H(+). Its pathway is cell wall biogenesis; peptidoglycan biosynthesis. In terms of biological role, cell wall formation. The protein is D-alanine--D-alanine ligase of Rickettsia felis (strain ATCC VR-1525 / URRWXCal2) (Rickettsia azadi).